The chain runs to 469 residues: Glutamine synthetase (469 aa).

The region spanning 14–99 (NDVKFVDLRF…VCDILDPVSG (86 aa)) is the GS beta-grasp domain. Positions 106-469 (RRGTAKKAEA…PVEYDMYYSA (364 aa)) constitute a GS catalytic domain. Positions 131 and 133 each coordinate Mg(2+). Residue E209 participates in ATP binding. Positions 214 and 221 each coordinate Mg(2+). Residues 265-266 (NG) and G266 contribute to the L-glutamate site. Residue H270 participates in Mg(2+) binding. ATP contacts are provided by residues 272-274 (HQS) and S274. L-glutamate is bound by residues R322, E328, and R340. The ATP site is built by R340, R345, and K353. E358 is a binding site for Mg(2+). R360 serves as a coordination point for L-glutamate. At Y398 the chain carries O-AMP-tyrosine.

This sequence belongs to the glutamine synthetase family. As to quaternary structure, oligomer of 12 subunits arranged in the form of two hexameric ring. Mg(2+) is required as a cofactor.

The protein localises to the cytoplasm. The enzyme catalyses L-glutamate + NH4(+) + ATP = L-glutamine + ADP + phosphate + H(+). The activity of this enzyme could be controlled by adenylation under conditions of abundant glutamine. Catalyzes the ATP-dependent biosynthesis of glutamine from glutamate and ammonia. The protein is Glutamine synthetase of Rhizobium leguminosarum bv. viciae.